The primary structure comprises 340 residues: Ribonucleoside-diphosphate reductase small subunit (340 aa).

A helical membrane pass occupies residues 180-200; the sequence is FILMILIEGIFFAASFAAIAY.

It belongs to the ribonucleoside diphosphate reductase small chain family. Heterotetramer composed of a homodimer of the large subunit (R1) and a homodimer of the small subunit (R2). Larger multisubunit protein complex are also active, composed of (R1)n(R2)n. Fe cation serves as cofactor.

It is found in the host membrane. It carries out the reaction a 2'-deoxyribonucleoside 5'-diphosphate + [thioredoxin]-disulfide + H2O = a ribonucleoside 5'-diphosphate + [thioredoxin]-dithiol. Ribonucleoside-diphosphate reductase holoenzyme provides the precursors necessary for viral DNA synthesis. Allows virus growth in non-dividing cells, as well as reactivation from latency in infected hosts. Catalyzes the biosynthesis of deoxyribonucleotides from the corresponding ribonucleotides. This is Ribonucleoside-diphosphate reductase small subunit from Human herpesvirus 1 (strain 17) (HHV-1).